Reading from the N-terminus, the 70-residue chain is DNA-directed RNA polymerase subunit epsilon (70 aa).

Belongs to the RNA polymerase subunit epsilon family. In terms of assembly, RNAP is composed of a core of 2 alpha, a beta and a beta' subunit. The core is associated with a delta subunit, and at least one of epsilon or omega. When a sigma factor is associated with the core the holoenzyme is formed, which can initiate transcription.

The catalysed reaction is RNA(n) + a ribonucleoside 5'-triphosphate = RNA(n+1) + diphosphate. A non-essential component of RNA polymerase (RNAP). This is DNA-directed RNA polymerase subunit epsilon from Limosilactobacillus reuteri (strain DSM 20016) (Lactobacillus reuteri).